The chain runs to 219 residues: Octanoyltransferase (219 aa).

The 176-residue stretch at 32-207 folds into the BPL/LPL catalytic domain; sequence ADSGDEIWLL…HLVRQLGYAQ (176 aa). Substrate contacts are provided by residues 71–78, 138–140, and 151–153; these read RGGQVTYH, SLG, and GLA. Cys169 serves as the catalytic Acyl-thioester intermediate.

The protein belongs to the LipB family.

The protein resides in the cytoplasm. The enzyme catalyses octanoyl-[ACP] + L-lysyl-[protein] = N(6)-octanoyl-L-lysyl-[protein] + holo-[ACP] + H(+). It functions in the pathway protein modification; protein lipoylation via endogenous pathway; protein N(6)-(lipoyl)lysine from octanoyl-[acyl-carrier-protein]: step 1/2. Functionally, catalyzes the transfer of endogenously produced octanoic acid from octanoyl-acyl-carrier-protein onto the lipoyl domains of lipoate-dependent enzymes. Lipoyl-ACP can also act as a substrate although octanoyl-ACP is likely to be the physiological substrate. The chain is Octanoyltransferase from Stutzerimonas stutzeri (strain A1501) (Pseudomonas stutzeri).